A 621-amino-acid chain; its full sequence is Signal recognition particle receptor subunit alpha homolog (621 aa).

An SRX region spans residues 1 to 158 (MFDQLAVFTP…KKFEQYFRIK (158 aa)). The segment at 167 to 217 (HINPDNFTKNGSVPQSHNKNTKKKLRDTKGKKQSTGNVGSGRKWGRDGGML) is disordered. Over residues 171–183 (DNFTKNGSVPQSH) the composition is skewed to polar residues. Positions 185–198 (KNTKKKLRDTKGKK) are enriched in basic residues. Ser239 carries the post-translational modification Phosphoserine. Residues 398-620 (YVFSIVGVNG…SVKWAVNTLM (223 aa)) form an NG domain region. GTP is bound by residues 404–411 (GVNGVGKS) and 510–514 (DTAGR). The residue at position 523 (Ser523) is a Phosphoserine. 572 to 575 (SKCD) is a binding site for GTP.

The protein belongs to the GTP-binding SRP family. As to quaternary structure, heterodimer of an alpha and a beta chain.

The protein resides in the endoplasmic reticulum membrane. Its function is as follows. Component of the SRP (signal recognition particle) receptor (SR). Ensures, in conjunction with the signal recognition particle, the correct targeting of the nascent secretory proteins to the endoplasmic reticulum membrane system. GTP hydrolysis may enhance the fidelity of and provide unidirectionality to the targeting reaction. It is important but not essential for cell growth. May be directly involved in mitochondrial protein import. This is Signal recognition particle receptor subunit alpha homolog (SRP101) from Saccharomyces cerevisiae (strain ATCC 204508 / S288c) (Baker's yeast).